We begin with the raw amino-acid sequence, 88 residues long: Small ribosomal subunit protein bS20 (88 aa).

It belongs to the bacterial ribosomal protein bS20 family.

Binds directly to 16S ribosomal RNA. This is Small ribosomal subunit protein bS20 from Bradyrhizobium sp. (strain BTAi1 / ATCC BAA-1182).